The sequence spans 239 residues: Adenylate dimethylallyltransferase (239 aa).

Belongs to the isopentenyl transferase family.

It carries out the reaction dimethylallyl diphosphate + AMP = N(6)-(dimethylallyl)adenosine 5'-phosphate + diphosphate. In terms of biological role, transfers dimethylallyl groups to AMP as part of the biosynthesis of cytokinin phytohormones. The chain is Adenylate dimethylallyltransferase (ipt) from Rhizobium radiobacter (Agrobacterium tumefaciens).